A 122-amino-acid chain; its full sequence is Large ribosomal subunit protein uL14 (122 aa).

The protein belongs to the universal ribosomal protein uL14 family. As to quaternary structure, part of the 50S ribosomal subunit. Forms a cluster with proteins L3 and L19. In the 70S ribosome, L14 and L19 interact and together make contacts with the 16S rRNA in bridges B5 and B8.

Its function is as follows. Binds to 23S rRNA. Forms part of two intersubunit bridges in the 70S ribosome. In Amoebophilus asiaticus (strain 5a2), this protein is Large ribosomal subunit protein uL14.